Reading from the N-terminus, the 499-residue chain is Ribulose bisphosphate carboxylase large chain (499 aa).

Substrate is bound by residues Asn-139 and Thr-189. Catalysis depends on Lys-191, which acts as the Proton acceptor. Lys-193 contacts substrate. Residues Lys-217, Asp-219, and Glu-220 each contribute to the Mg(2+) site. Residue Lys-217 is modified to N6-carboxylysine. The active-site Proton acceptor is His-309. The substrate site is built by Arg-310, His-342, and Ser-394.

It belongs to the RuBisCO large chain family. Type I subfamily. As to quaternary structure, heterohexadecamer of 8 large chains and 8 small chains. The cofactor is Mg(2+).

It catalyses the reaction 2 (2R)-3-phosphoglycerate + 2 H(+) = D-ribulose 1,5-bisphosphate + CO2 + H2O. The enzyme catalyses D-ribulose 1,5-bisphosphate + O2 = 2-phosphoglycolate + (2R)-3-phosphoglycerate + 2 H(+). Its function is as follows. RuBisCO catalyzes two reactions: the carboxylation of D-ribulose 1,5-bisphosphate, the primary event in carbon dioxide fixation, as well as the oxidative fragmentation of the pentose substrate. Both reactions occur simultaneously and in competition at the same active site. The protein is Ribulose bisphosphate carboxylase large chain of Paraburkholderia xenovorans (strain LB400).